We begin with the raw amino-acid sequence, 214 residues long: Small ribosomal subunit protein uS5 (214 aa).

The region spanning 54 to 117 is the S5 DRBM domain; it reads LKYEVVDIKV…RDAKMNIIPV (64 aa).

The protein belongs to the universal ribosomal protein uS5 family. Part of the 30S ribosomal subunit. Contacts protein S4.

Functionally, with S4 and S12 plays an important role in translational accuracy. The chain is Small ribosomal subunit protein uS5 from Saccharolobus solfataricus (strain ATCC 35092 / DSM 1617 / JCM 11322 / P2) (Sulfolobus solfataricus).